We begin with the raw amino-acid sequence, 1365 residues long: Homeotic protein spalt-major (1365 aa).

3 disordered regions span residues 47-194 (SADK…EVTL), 270-298 (QAKQ…EEEE), and 322-363 (LINA…NTHK). Composition is skewed to low complexity over residues 63-76 (SPLT…SPSR) and 87-99 (EQST…PEQS). Positions 103–117 (HQLENDIKSEAKSEI) are enriched in basic and acidic residues. Residues 146–157 (PSSPVAEASAEE) show a composition bias toward low complexity. Over residues 159-181 (ATERTPEKEKEKDVEVDVEKPDE) the composition is skewed to basic and acidic residues. Residues 275-298 (EDTEEDADQEQDQEQETDTYEEEE) are compositionally biased toward acidic residues. The segment covering 346–363 (HDHESQPNRRPSLDNTHK) has biased composition (basic and acidic residues). C2H2-type zinc fingers lie at residues 451 to 473 (HRCR…IRSH) and 479 to 501 (FKCN…FQRH). 2 disordered regions span residues 508-554 (VPMN…ASFP) and 586-716 (ELPT…TPGQ). A compositionally biased stretch (polar residues) spans 530–539 (MSPTDSSPNH). Residues 540-554 (SPAPPPLGSAPASFP) are compositionally biased toward pro residues. 2 stretches are compositionally biased toward basic and acidic residues: residues 603 to 622 (PQVK…HEQE) and 638 to 662 (VRIK…EPRR). Phosphoserine occurs at positions 739 and 744. Residues 740–772 (PEHHSPVRSPAGGALPPGVPPPPHHHPHHMARS) form a disordered region. 3 consecutive C2H2-type zinc fingers follow at residues 824–846 (NQCV…YRTH), 852–874 (FKCR…MAVH), and 884–906 (HQCP…IRLH). Disordered stretches follow at residues 948-1012 (ALPG…RSGD), 1030-1129 (VVNT…ILTS), and 1146-1241 (HHLQ…GARP). A compositionally biased stretch (acidic residues) spans 976-991 (DMDDNMDCGEDYDDDV). Residues 1040–1054 (SSASSHGHSVGSTSA) are compositionally biased toward low complexity. Positions 1055–1079 (PTSPSVHASSQVIKRSSSPARSEAS) are enriched in polar residues. Residues Ser-1076 and Ser-1079 each carry the phosphoserine modification. Low complexity-rich tracts occupy residues 1085–1100 (LTPR…SRSP), 1114–1123 (RSPSGSSHAS), and 1146–1168 (HHLQ…AAAA). A compositionally biased stretch (basic and acidic residues) spans 1181–1191 (QHQEQLRREAA). A compositionally biased stretch (low complexity) spans 1192-1218 (EAQQKAAAAAAAAAAAAAAQRQTPPQA). 2 consecutive C2H2-type zinc fingers follow at residues 1289–1311 (TTCG…YRSH) and 1317–1339 (FKCS…MLTH).

It belongs to the sal C2H2-type zinc-finger protein family.

Its subcellular location is the nucleus. Required for the establishment of the posterior-most head and the anterior-most tail segments of the embryo. Probably function as a transcriptional regulator. Could repress the transcription of the tsh gene. This is Homeotic protein spalt-major (salm) from Drosophila melanogaster (Fruit fly).